Consider the following 1581-residue polypeptide: Pentafunctional AROM polypeptide (1581 aa).

Positions 1–384 (MPEPTKISIL…YEPKASVVPN (384 aa)) are 3-dehydroquinate synthase. Residues 44 to 46 (DTN), 81 to 84 (EVSK), 114 to 116 (GGV), and aspartate 119 each bind NAD(+). Residue arginine 130 coordinates 7-phospho-2-dehydro-3-deoxy-D-arabino-heptonate. Residue 139–140 (TT) participates in NAD(+) binding. 2 residues coordinate 7-phospho-2-dehydro-3-deoxy-D-arabino-heptonate: aspartate 146 and lysine 152. Lysine 161 contacts NAD(+). Asparagine 162 provides a ligand contact to 7-phospho-2-dehydro-3-deoxy-D-arabino-heptonate. NAD(+) is bound by residues 179–182 (FLET) and asparagine 190. Residue glutamate 194 coordinates Zn(2+). Residues 194 to 197 (EVIK) and lysine 250 contribute to the 7-phospho-2-dehydro-3-deoxy-D-arabino-heptonate site. Residue glutamate 260 is the Proton acceptor; for 3-dehydroquinate synthase activity of the active site. Residues 264 to 268 (RNLLN) and histidine 271 each bind 7-phospho-2-dehydro-3-deoxy-D-arabino-heptonate. A Zn(2+)-binding site is contributed by histidine 271. Histidine 275 (proton acceptor; for 3-dehydroquinate synthase activity) is an active-site residue. Histidine 287 and lysine 356 together coordinate 7-phospho-2-dehydro-3-deoxy-D-arabino-heptonate. Histidine 287 contributes to the Zn(2+) binding site. The tract at residues 397–842 (VHPGVPKESN…WDTLRQLFSV (446 aa)) is EPSP synthase. Cysteine 824 functions as the For EPSP synthase activity in the catalytic mechanism. The segment at 864-1056 (SASVFIIGMR…KQKKHSFFVS (193 aa)) is shikimate kinase. 871–878 (GMRGAGKT) is a binding site for ATP. The 3-dehydroquinase stretch occupies residues 1057-1277 (LTLPDLRSAS…AAPGQLSATE (221 aa)). Residue histidine 1180 is the Proton acceptor; for 3-dehydroquinate dehydratase activity of the active site. Lysine 1208 serves as the catalytic Schiff-base intermediate with substrate; for 3-dehydroquinate dehydratase activity. The interval 1290–1581 (KKRFAIFGNP…ARTAVLGDSA (292 aa)) is shikimate dehydrogenase.

This sequence in the N-terminal section; belongs to the sugar phosphate cyclases superfamily. Dehydroquinate synthase family. In the 2nd section; belongs to the EPSP synthase family. It in the 3rd section; belongs to the shikimate kinase family. The protein in the 4th section; belongs to the type-I 3-dehydroquinase family. This sequence in the C-terminal section; belongs to the shikimate dehydrogenase family. Homodimer. It depends on Zn(2+) as a cofactor.

It localises to the cytoplasm. The catalysed reaction is 7-phospho-2-dehydro-3-deoxy-D-arabino-heptonate = 3-dehydroquinate + phosphate. It carries out the reaction 3-dehydroquinate = 3-dehydroshikimate + H2O. It catalyses the reaction shikimate + NADP(+) = 3-dehydroshikimate + NADPH + H(+). The enzyme catalyses shikimate + ATP = 3-phosphoshikimate + ADP + H(+). The catalysed reaction is 3-phosphoshikimate + phosphoenolpyruvate = 5-O-(1-carboxyvinyl)-3-phosphoshikimate + phosphate. Its pathway is metabolic intermediate biosynthesis; chorismate biosynthesis; chorismate from D-erythrose 4-phosphate and phosphoenolpyruvate: step 2/7. The protein operates within metabolic intermediate biosynthesis; chorismate biosynthesis; chorismate from D-erythrose 4-phosphate and phosphoenolpyruvate: step 3/7. It participates in metabolic intermediate biosynthesis; chorismate biosynthesis; chorismate from D-erythrose 4-phosphate and phosphoenolpyruvate: step 4/7. It functions in the pathway metabolic intermediate biosynthesis; chorismate biosynthesis; chorismate from D-erythrose 4-phosphate and phosphoenolpyruvate: step 5/7. Its pathway is metabolic intermediate biosynthesis; chorismate biosynthesis; chorismate from D-erythrose 4-phosphate and phosphoenolpyruvate: step 6/7. In terms of biological role, the AROM polypeptide catalyzes 5 consecutive enzymatic reactions in prechorismate polyaromatic amino acid biosynthesis. This Aspergillus terreus (strain NIH 2624 / FGSC A1156) protein is Pentafunctional AROM polypeptide.